The primary structure comprises 253 residues: Ribonuclease HII (253 aa).

The 184-residue stretch at 70–253 (NLIAGIDEVG…KSFEPIKSML (184 aa)) folds into the RNase H type-2 domain. A divalent metal cation-binding residues include Asp-76, Glu-77, and Asp-168.

Belongs to the RNase HII family. Mn(2+) serves as cofactor. It depends on Mg(2+) as a cofactor.

The protein localises to the cytoplasm. The catalysed reaction is Endonucleolytic cleavage to 5'-phosphomonoester.. In terms of biological role, endonuclease that specifically degrades the RNA of RNA-DNA hybrids. The chain is Ribonuclease HII from Streptococcus agalactiae serotype III (strain NEM316).